The chain runs to 537 residues: Glucose-6-phosphate isomerase (537 aa).

Catalysis depends on Glu-341, which acts as the Proton donor. Catalysis depends on residues His-372 and Lys-501.

This sequence belongs to the GPI family.

Its subcellular location is the cytoplasm. The catalysed reaction is alpha-D-glucose 6-phosphate = beta-D-fructose 6-phosphate. It functions in the pathway carbohydrate biosynthesis; gluconeogenesis. The protein operates within carbohydrate degradation; glycolysis; D-glyceraldehyde 3-phosphate and glycerone phosphate from D-glucose: step 2/4. Catalyzes the reversible isomerization of glucose-6-phosphate to fructose-6-phosphate. The polypeptide is Glucose-6-phosphate isomerase (Jannaschia sp. (strain CCS1)).